Reading from the N-terminus, the 314-residue chain is 4-hydroxy-3-methylbut-2-enyl diphosphate reductase (314 aa).

Cysteine 12 contributes to the [4Fe-4S] cluster binding site. 2 residues coordinate (2E)-4-hydroxy-3-methylbut-2-enyl diphosphate: histidine 41 and histidine 74. Residues histidine 41 and histidine 74 each coordinate dimethylallyl diphosphate. The isopentenyl diphosphate site is built by histidine 41 and histidine 74. A [4Fe-4S] cluster-binding site is contributed by cysteine 96. Histidine 124 serves as a coordination point for (2E)-4-hydroxy-3-methylbut-2-enyl diphosphate. Histidine 124 contributes to the dimethylallyl diphosphate binding site. Isopentenyl diphosphate is bound at residue histidine 124. Glutamate 126 serves as the catalytic Proton donor. Residue threonine 167 coordinates (2E)-4-hydroxy-3-methylbut-2-enyl diphosphate. Cysteine 197 provides a ligand contact to [4Fe-4S] cluster. The (2E)-4-hydroxy-3-methylbut-2-enyl diphosphate site is built by serine 225, serine 226, asparagine 227, and serine 269. Dimethylallyl diphosphate contacts are provided by serine 225, serine 226, asparagine 227, and serine 269. Positions 225, 226, 227, and 269 each coordinate isopentenyl diphosphate.

This sequence belongs to the IspH family. It depends on [4Fe-4S] cluster as a cofactor.

It catalyses the reaction isopentenyl diphosphate + 2 oxidized [2Fe-2S]-[ferredoxin] + H2O = (2E)-4-hydroxy-3-methylbut-2-enyl diphosphate + 2 reduced [2Fe-2S]-[ferredoxin] + 2 H(+). It carries out the reaction dimethylallyl diphosphate + 2 oxidized [2Fe-2S]-[ferredoxin] + H2O = (2E)-4-hydroxy-3-methylbut-2-enyl diphosphate + 2 reduced [2Fe-2S]-[ferredoxin] + 2 H(+). The protein operates within isoprenoid biosynthesis; dimethylallyl diphosphate biosynthesis; dimethylallyl diphosphate from (2E)-4-hydroxy-3-methylbutenyl diphosphate: step 1/1. It participates in isoprenoid biosynthesis; isopentenyl diphosphate biosynthesis via DXP pathway; isopentenyl diphosphate from 1-deoxy-D-xylulose 5-phosphate: step 6/6. Catalyzes the conversion of 1-hydroxy-2-methyl-2-(E)-butenyl 4-diphosphate (HMBPP) into a mixture of isopentenyl diphosphate (IPP) and dimethylallyl diphosphate (DMAPP). Acts in the terminal step of the DOXP/MEP pathway for isoprenoid precursor biosynthesis. The chain is 4-hydroxy-3-methylbut-2-enyl diphosphate reductase from Actinobacillus pleuropneumoniae serotype 3 (strain JL03).